Here is a 208-residue protein sequence, read N- to C-terminus: Peptidyl-tRNA hydrolase (208 aa).

Position 19 (Y19) interacts with tRNA. H24 acts as the Proton acceptor in catalysis. Residues F71, N73, and N119 each contribute to the tRNA site.

Belongs to the PTH family. In terms of assembly, monomer.

It localises to the cytoplasm. The enzyme catalyses an N-acyl-L-alpha-aminoacyl-tRNA + H2O = an N-acyl-L-amino acid + a tRNA + H(+). Functionally, hydrolyzes ribosome-free peptidyl-tRNAs (with 1 or more amino acids incorporated), which drop off the ribosome during protein synthesis, or as a result of ribosome stalling. Catalyzes the release of premature peptidyl moieties from peptidyl-tRNA molecules trapped in stalled 50S ribosomal subunits, and thus maintains levels of free tRNAs and 50S ribosomes. This is Peptidyl-tRNA hydrolase from Synechococcus elongatus (strain ATCC 33912 / PCC 7942 / FACHB-805) (Anacystis nidulans R2).